The chain runs to 281 residues: Glycerol uptake facilitator protein (281 aa).

Residues 1 to 5 (MSQTS) are Cytoplasmic-facing. A helical transmembrane segment spans residues 6-34 (TLKGQCIAEFLGTGLLIFFGVGCVAALKV). The Periplasmic segment spans residues 35-39 (AGASF). Residues 40-60 (GQWEISVIWGLGVAMAIYLTA) form a helical membrane-spanning segment. Residues 61 to 63 (GVS) lie on the Cytoplasmic side of the membrane. Residues 64-67 (GAHL) lie within the membrane without spanning it. An NPA 1 motif is present at residues 68–70 (NPA). The helical intramembrane region spans 68-78 (NPAVTIALWLF). Topologically, residues 79-84 (ACFDKR) are cytoplasmic. The helical transmembrane segment at 85-108 (KVIPFIVSQVAGAFCAAALVYGLY) threads the bilayer. Residues 109–143 (YNLFFDFEQTHHIVRGSVESVDLAGTFSTYPNPHI) are Periplasmic-facing. A helical transmembrane segment spans residues 144–169 (NFVQAFAVEMVITAILMGLILALTDD). Over 170–177 (GNGVPRGP) the chain is Cytoplasmic. A helical membrane pass occupies residues 178 to 194 (LAPLLIGLLIAVIGASM). The Periplasmic segment spans residues 195 to 198 (GPLT). An intramembrane segment occupies 199–202 (GFAM). An NPA 2 motif is present at residues 203–205 (NPA). Residues 203–216 (NPARDFGPKVFAWL) constitute an intramembrane region (helical). At 217-231 (AGWGNVAFTGGRDIP) the chain is on the periplasmic side. Residues 232–254 (YFLVPLFGPIVGAIVGAFAYRKL) traverse the membrane as a helical segment. At 255-281 (IGRHLPCDICVVEEKETTTPSEQKASL) the chain is on the cytoplasmic side.

The protein belongs to the MIP/aquaporin (TC 1.A.8) family. Homotetramer.

Its subcellular location is the cell inner membrane. It catalyses the reaction glycerol(in) = glycerol(out). Functionally, mediates glycerol diffusion across the cytoplasmic membrane via a pore-type mechanism. This chain is Glycerol uptake facilitator protein (glpF), found in Escherichia coli O157:H7.